The following is a 191-amino-acid chain: UPF0312 protein PSPA7_0523 (191 aa).

The first 23 residues, 1-23, serve as a signal peptide directing secretion; sequence MLKKTLAALALGSALFTAGQAMA.

It belongs to the UPF0312 family. Type 1 subfamily.

The protein localises to the periplasm. The chain is UPF0312 protein PSPA7_0523 from Pseudomonas paraeruginosa (strain DSM 24068 / PA7) (Pseudomonas aeruginosa (strain PA7)).